Reading from the N-terminus, the 261-residue chain is Cytochrome c oxidase subunit 3 (261 aa).

Residues 1 to 15 (MTHQTHAYHMVNPSP) lie on the Mitochondrial matrix side of the membrane. A helical transmembrane segment spans residues 16-34 (WPLTGALSALLMTSGLIMW). Topologically, residues 35–40 (FHFNST) are mitochondrial intermembrane. The helical transmembrane segment at 41–66 (TLLMLGLTTNMLTMYQWWRDVIREST) threads the bilayer. At 67–72 (FQGHHT) the chain is on the mitochondrial matrix side. Residues 73–105 (PNVQKGLRYGMILFIISEVLFFTGFFWAFYHSS) traverse the membrane as a helical segment. At 106 to 128 (LAPTPELGGCWPPTGIHPLNPLE) the chain is on the mitochondrial intermembrane side. A helical membrane pass occupies residues 129 to 152 (VPLLNTSVLLASGVSITWAHHSLM). Topologically, residues 153–155 (EGN) are mitochondrial matrix. The helical transmembrane segment at 156–183 (RNHMLQALFITIALGVYFTLLQASEYYE) threads the bilayer. Residues 184–190 (APFTISD) lie on the Mitochondrial intermembrane side of the membrane. The helical transmembrane segment at 191–223 (GVYGSTFFVATGFHGLHVIIGSTFLIVCFFRQL) threads the bilayer. Over 224 to 232 (KFHFTSSHH) the chain is Mitochondrial matrix. The helical transmembrane segment at 233–256 (FGFEAAAWYWHFVDVVWLFLYVSI) threads the bilayer. Residues 257-261 (YWWGS) are Mitochondrial intermembrane-facing.

The protein belongs to the cytochrome c oxidase subunit 3 family. Component of the cytochrome c oxidase (complex IV, CIV), a multisubunit enzyme composed of 14 subunits. The complex is composed of a catalytic core of 3 subunits MT-CO1, MT-CO2 and MT-CO3, encoded in the mitochondrial DNA, and 11 supernumerary subunits COX4I, COX5A, COX5B, COX6A, COX6B, COX6C, COX7A, COX7B, COX7C, COX8 and NDUFA4, which are encoded in the nuclear genome. The complex exists as a monomer or a dimer and forms supercomplexes (SCs) in the inner mitochondrial membrane with NADH-ubiquinone oxidoreductase (complex I, CI) and ubiquinol-cytochrome c oxidoreductase (cytochrome b-c1 complex, complex III, CIII), resulting in different assemblies (supercomplex SCI(1)III(2)IV(1) and megacomplex MCI(2)III(2)IV(2)).

The protein resides in the mitochondrion inner membrane. The catalysed reaction is 4 Fe(II)-[cytochrome c] + O2 + 8 H(+)(in) = 4 Fe(III)-[cytochrome c] + 2 H2O + 4 H(+)(out). Component of the cytochrome c oxidase, the last enzyme in the mitochondrial electron transport chain which drives oxidative phosphorylation. The respiratory chain contains 3 multisubunit complexes succinate dehydrogenase (complex II, CII), ubiquinol-cytochrome c oxidoreductase (cytochrome b-c1 complex, complex III, CIII) and cytochrome c oxidase (complex IV, CIV), that cooperate to transfer electrons derived from NADH and succinate to molecular oxygen, creating an electrochemical gradient over the inner membrane that drives transmembrane transport and the ATP synthase. Cytochrome c oxidase is the component of the respiratory chain that catalyzes the reduction of oxygen to water. Electrons originating from reduced cytochrome c in the intermembrane space (IMS) are transferred via the dinuclear copper A center (CU(A)) of subunit 2 and heme A of subunit 1 to the active site in subunit 1, a binuclear center (BNC) formed by heme A3 and copper B (CU(B)). The BNC reduces molecular oxygen to 2 water molecules using 4 electrons from cytochrome c in the IMS and 4 protons from the mitochondrial matrix. The protein is Cytochrome c oxidase subunit 3 (MT-CO3) of Gazella bennettii (Chinkara).